The sequence spans 474 residues: DNA damage checkpoint control protein MEC3 (474 aa).

A Phosphoserine modification is found at Ser452.

It belongs to the MEC3 family. In terms of assembly, component of the checkpoint clamp complex composed of DDC1, MEC3 and RAD17. The interaction with MEC3 is performed in a RAD17-dependent manner. The checkpoint clamp complex loads onto DNA. Interacts with the DNA polymerase zeta subunit REV7. Also forms a heterotrimer with 2 RAD17 subunits. Interacts with SET1.

It localises to the nucleus. Its function is as follows. Component of the checkpoint clamp complex involved in the surveillance mechanism that allows the DNA repair pathways to act to restore the integrity of the DNA prior to DNA synthesis or separation of the replicated chromosomes. Associates with sites of DNA damage and modulates the MEC1 signaling pathway and the activation of RAD53 in response to DNA damage at phase G1. The complex also physically regulates DNA polymerase zeta-dependent mutagenesis by controlling the access of polymerase zeta to damaged DNA. The polypeptide is DNA damage checkpoint control protein MEC3 (MEC3) (Saccharomyces cerevisiae (strain ATCC 204508 / S288c) (Baker's yeast)).